Reading from the N-terminus, the 239-residue chain is Purine nucleoside phosphorylase DeoD-type (239 aa).

His5 provides a ligand contact to a purine D-ribonucleoside. Phosphate is bound by residues Gly21, Arg25, Arg44, and 88–91 (RVGS). A purine D-ribonucleoside is bound by residues 180–182 (EME) and 204–205 (SD). Residue Asp205 is the Proton donor of the active site.

This sequence belongs to the PNP/UDP phosphorylase family. In terms of assembly, homohexamer; trimer of homodimers.

The catalysed reaction is a purine D-ribonucleoside + phosphate = a purine nucleobase + alpha-D-ribose 1-phosphate. The enzyme catalyses a purine 2'-deoxy-D-ribonucleoside + phosphate = a purine nucleobase + 2-deoxy-alpha-D-ribose 1-phosphate. Functionally, catalyzes the reversible phosphorolytic breakdown of the N-glycosidic bond in the beta-(deoxy)ribonucleoside molecules, with the formation of the corresponding free purine bases and pentose-1-phosphate. In Yersinia pestis bv. Antiqua (strain Antiqua), this protein is Purine nucleoside phosphorylase DeoD-type.